Here is a 183-residue protein sequence, read N- to C-terminus: Ribulose bisphosphate carboxylase small subunit, chloroplastic 4 (183 aa).

The N-terminal 57 residues, methionine 1–glutamine 57, are a transit peptide targeting the chloroplast.

Belongs to the RuBisCO small chain family. In terms of assembly, heterohexadecamer of 8 large and 8 small subunits.

It localises to the plastid. The protein resides in the chloroplast. Its function is as follows. RuBisCO catalyzes two reactions: the carboxylation of D-ribulose 1,5-bisphosphate, the primary event in carbon dioxide fixation, as well as the oxidative fragmentation of the pentose substrate. Both reactions occur simultaneously and in competition at the same active site. Although the small subunit is not catalytic it is essential for maximal activity. This is Ribulose bisphosphate carboxylase small subunit, chloroplastic 4 from Mesembryanthemum crystallinum (Common ice plant).